A 157-amino-acid polypeptide reads, in one-letter code: Large ribosomal subunit protein uL22 (157 aa).

This sequence belongs to the universal ribosomal protein uL22 family. As to quaternary structure, part of the 50S ribosomal subunit.

This protein binds specifically to 23S rRNA. It makes multiple contacts with different domains of the 23S rRNA in the assembled 50S subunit and ribosome. Its function is as follows. The globular domain of the protein is located near the polypeptide exit tunnel on the outside of the subunit, while an extended beta-hairpin is found that lines the wall of the exit tunnel in the center of the 70S ribosome. The sequence is that of Large ribosomal subunit protein uL22 from Methanocorpusculum labreanum (strain ATCC 43576 / DSM 4855 / Z).